A 445-amino-acid chain; its full sequence is MKPVIALVGRPNVGKSTLFNRLTRSRDALVADLPGLTRDRHYGEGRTGERPYLVVDTGGFEPVAKDGILHEMARQTRQAVEESDIVVFIVDGRNGLAPQDKSIADYLRKVGRPIFLVVNKAEGMKYSTVAADFYELGLGDPRAISAAHGDGVTEMINEALEVAYAGQPEENDDEKAARGVKIAIVGRPNVGKSTLINALVGEERVIAFDMPGTTRDSIYVDFERGGKPYTLIDTAGLRRRGKVFEAIEKFSVVKTLQSISDANVVILLLDARQDISEQDAHIAGFVVEQGRALVVGVNKWDGLDPHVRERTKADLERKLKFLDFAKFHFISAAEKTGIGPLMRSVDDAYAAAMAKLPTPKLTRALIDAVEFQQPRRRGPVRPKLRYAHQGGQNPPIIVIHGNALDAITETYKRYLENRFRETFKLTGTPLRIEFRSSTNPYADKA.

EngA-type G domains lie at 3 to 167 (PVIA…YAGQ) and 180 to 353 (VKIA…AAAM). GTP is bound by residues 9-16 (GRPNVGKS), 56-60 (DTGGF), 119-122 (NKAE), 186-193 (GRPNVGKS), 233-237 (DTAGL), and 298-301 (NKWD). Positions 354–438 (AKLPTPKLTR…PLRIEFRSST (85 aa)) constitute a KH-like domain.

Belongs to the TRAFAC class TrmE-Era-EngA-EngB-Septin-like GTPase superfamily. EngA (Der) GTPase family. Associates with the 50S ribosomal subunit.

GTPase that plays an essential role in the late steps of ribosome biogenesis. This is GTPase Der from Paraburkholderia xenovorans (strain LB400).